A 141-amino-acid polypeptide reads, in one-letter code: Large ribosomal subunit protein uL11 (141 aa).

The protein belongs to the universal ribosomal protein uL11 family. As to quaternary structure, part of the ribosomal stalk of the 50S ribosomal subunit. Interacts with L10 and the large rRNA to form the base of the stalk. L10 forms an elongated spine to which L12 dimers bind in a sequential fashion forming a multimeric L10(L12)X complex. In terms of processing, one or more lysine residues are methylated.

Its function is as follows. Forms part of the ribosomal stalk which helps the ribosome interact with GTP-bound translation factors. This is Large ribosomal subunit protein uL11 from Chlamydia felis (strain Fe/C-56) (Chlamydophila felis).